Reading from the N-terminus, the 159-residue chain is UPF0336 protein ML1910 (159 aa).

Belongs to the UPF0336 family.

This is UPF0336 protein ML1910 from Mycobacterium leprae (strain TN).